Consider the following 514-residue polypeptide: Nitric oxide reductase transcription regulator NorR1 (514 aa).

A 4-aspartylphosphate modification is found at Asp-54. Positions 187–416 (IIGQSQAIAG…LEHVISRAAL (230 aa)) constitute a Sigma-54 factor interaction domain. ATP contacts are provided by residues 215 to 222 (GETGVGKE) and 287 to 296 (EVGELPLSIQ). The H-T-H motif DNA-binding region spans 490–509 (WAKAARQLGMDASNLHKLAK).

Its pathway is nitrogen metabolism; nitrate reduction (denitrification) [regulation]. Functionally, required for the nitric oxide (NO) induced expression of NO reductase. Not required for expression of 2 other pathway members, nitrate reductase (nirS) and nitrous oxide reductase (nosZ). The protein is Nitric oxide reductase transcription regulator NorR1 (norR1) of Cupriavidus necator (strain ATCC 17699 / DSM 428 / KCTC 22496 / NCIMB 10442 / H16 / Stanier 337) (Ralstonia eutropha).